The following is a 169-amino-acid chain: MPEVDRFGRLPWLWITVLVFVLDQVSKAFFQAELSMYQQVVVIPDLFSWTLAYNTGAAFSFLADSSGWQRWLFALIAIVVSAILVVWLKRLKKGETWLAVALALVLGGALGNLYDRMVLGHVVDFILVHWQNRWYFPAFNLADSAITVGAVMLALDMFRSKKSGEAAHG.

The next 4 helical transmembrane spans lie at 10 to 30 (LPWL…KAFF), 41 to 61 (VVIP…AFSF), 68 to 88 (WQRW…VVWL), and 94 to 114 (GETW…GNLY). Residues Asp-124 and Asp-143 contribute to the active site. Residues 135–155 (YFPAFNLADSAITVGAVMLAL) form a helical membrane-spanning segment.

This sequence belongs to the peptidase A8 family.

Its subcellular location is the cell inner membrane. The catalysed reaction is Release of signal peptides from bacterial membrane prolipoproteins. Hydrolyzes -Xaa-Yaa-Zaa-|-(S,diacylglyceryl)Cys-, in which Xaa is hydrophobic (preferably Leu), and Yaa (Ala or Ser) and Zaa (Gly or Ala) have small, neutral side chains.. It functions in the pathway protein modification; lipoprotein biosynthesis (signal peptide cleavage). In terms of biological role, this protein specifically catalyzes the removal of signal peptides from prolipoproteins. The protein is Lipoprotein signal peptidase of Pseudomonas paraeruginosa (strain DSM 24068 / PA7) (Pseudomonas aeruginosa (strain PA7)).